A 218-amino-acid polypeptide reads, in one-letter code: uncharacterized protein (218 aa).

The transit peptide at Met-1–Arg-28 directs the protein to the chloroplast.

It belongs to the SixA phosphatase family.

It is found in the plastid. The protein resides in the chloroplast. This is an uncharacterized protein from Arabidopsis thaliana (Mouse-ear cress).